A 432-amino-acid chain; its full sequence is Adenylosuccinate synthetase (432 aa).

GTP-binding positions include 13-19 (GDEGKGK) and 41-43 (GHT). The active-site Proton acceptor is the Asp-14. The Mg(2+) site is built by Asp-14 and Gly-41. IMP contacts are provided by residues 14–17 (DEGK), 39–42 (NAGH), Thr-130, Arg-144, Gln-225, Thr-240, and Arg-304. Catalysis depends on His-42, which acts as the Proton donor. Substrate is bound at residue 300–306 (AVTGRPR). Residues Arg-306, 332–334 (KLD), and 415–417 (STG) contribute to the GTP site.

Belongs to the adenylosuccinate synthetase family. In terms of assembly, homodimer. The cofactor is Mg(2+).

The protein resides in the cytoplasm. The enzyme catalyses IMP + L-aspartate + GTP = N(6)-(1,2-dicarboxyethyl)-AMP + GDP + phosphate + 2 H(+). It functions in the pathway purine metabolism; AMP biosynthesis via de novo pathway; AMP from IMP: step 1/2. Its function is as follows. Plays an important role in the de novo pathway of purine nucleotide biosynthesis. Catalyzes the first committed step in the biosynthesis of AMP from IMP. In Haemophilus influenzae (strain PittGG), this protein is Adenylosuccinate synthetase.